Reading from the N-terminus, the 301-residue chain is ATP synthase gamma chain (301 aa).

It belongs to the ATPase gamma chain family. In terms of assembly, F-type ATPases have 2 components, CF(1) - the catalytic core - and CF(0) - the membrane proton channel. CF(1) has five subunits: alpha(3), beta(3), gamma(1), delta(1), epsilon(1). CF(0) has three main subunits: a, b and c.

It is found in the cell inner membrane. Produces ATP from ADP in the presence of a proton gradient across the membrane. The gamma chain is believed to be important in regulating ATPase activity and the flow of protons through the CF(0) complex. The sequence is that of ATP synthase gamma chain from Helicobacter pylori (strain P12).